Consider the following 257-residue polypeptide: Trans-aconitate 2-methyltransferase (257 aa).

Belongs to the methyltransferase superfamily. Tam family.

The protein localises to the cytoplasm. The enzyme catalyses trans-aconitate + S-adenosyl-L-methionine = (E)-3-(methoxycarbonyl)pent-2-enedioate + S-adenosyl-L-homocysteine. Catalyzes the S-adenosylmethionine monomethyl esterification of trans-aconitate. This chain is Trans-aconitate 2-methyltransferase, found in Sinorhizobium fredii (strain NBRC 101917 / NGR234).